The sequence spans 324 residues: Protein GET4 (324 aa).

Belongs to the GET4 family. In terms of assembly, interacts with GET3A.

Its subcellular location is the cytoplasm. It is found in the cytosol. Functionally, involved in the regulation of root hair growth. This chain is Protein GET4, found in Arabidopsis thaliana (Mouse-ear cress).